We begin with the raw amino-acid sequence, 121 residues long: MQFTTIVMTLAAAVAVTAYPGSSSAFGVGQDEHKHHSSDDHSATGASKGATCAVGSQVSCCTTDSSGSDVLGNVLGGSCLVDNLSLISILNSQCPGANTFCCPSNQDGTLNIHAACIPVAL.

The N-terminal stretch at Met1 to Ala18 is a signal peptide. 4 disulfide bridges follow: Cys52–Cys101, Cys60–Cys94, Cys61–Cys79, and Cys102–Cys116. Asn83 carries N-linked (GlcNAc...) asparagine glycosylation.

It belongs to the fungal hydrophobin family. As to quaternary structure, self-assembles to form functional amyloid fibrils called rodlets. Self-assembly into fibrillar rodlets occurs spontaneously at hydrophobic:hydrophilic interfaces and the rodlets further associate laterally to form amphipathic monolayers. Expressed in conidia and aerial hyphae.

It localises to the secreted. Its subcellular location is the cell wall. Functionally, aerial growth, conidiation, and dispersal of filamentous fungi in the environment rely upon a capability of their secreting small amphipathic proteins called hydrophobins (HPBs) with low sequence identity. Class I can self-assemble into an outermost layer of rodlet bundles on aerial cell surfaces, conferring cellular hydrophobicity that supports fungal growth, development and dispersal; whereas Class II form highly ordered films at water-air interfaces through intermolecular interactions but contribute nothing to the rodlet structure. Hcf-2 is a class I hydrophobin that is not necessary for the development of hyphae or conidia but contributes to cell surface hydrophobicity. The protein is Class I hydrophobin 2 of Passalora fulva (Tomato leaf mold).